Reading from the N-terminus, the 308-residue chain is Glutathione synthetase (308 aa).

Residues 120-304 (KLGALRFNNL…LADQVIARLL (185 aa)) form the ATP-grasp domain. ATP is bound at residue 146–202 (AREQEEVVLKPLGGRAGQGLVRVAGAAPGLEALLELVTDQEQLPVMVQRFLPAVIEG). Positions 275 and 277 each coordinate Mg(2+).

The protein belongs to the prokaryotic GSH synthase family. Requires Mg(2+) as cofactor. Mn(2+) serves as cofactor.

The enzyme catalyses gamma-L-glutamyl-L-cysteine + glycine + ATP = glutathione + ADP + phosphate + H(+). The protein operates within sulfur metabolism; glutathione biosynthesis; glutathione from L-cysteine and L-glutamate: step 2/2. In Prochlorococcus marinus (strain MIT 9313), this protein is Glutathione synthetase.